We begin with the raw amino-acid sequence, 451 residues long: Bifunctional protein GlmU (451 aa).

The interval 1–225 (MVVVAILAAG…YQEILGINDR (225 aa)) is pyrophosphorylase. UDP-N-acetyl-alpha-D-glucosamine is bound by residues 7–10 (LAAG), Lys21, Gln72, and 77–78 (GT). Residue Asp102 participates in Mg(2+) binding. 4 residues coordinate UDP-N-acetyl-alpha-D-glucosamine: Gly139, Glu154, Asn169, and Asn223. Position 223 (Asn223) interacts with Mg(2+). The linker stretch occupies residues 226 to 246 (LQLATAYEILQRRVKEQWMMA). The segment at 247-451 (GVTLIDPNSI…PGWRKKSGES (205 aa)) is N-acetyltransferase. UDP-N-acetyl-alpha-D-glucosamine is bound by residues Arg328 and Lys346. His358 functions as the Proton acceptor in the catalytic mechanism. Tyr361 and Asn372 together coordinate UDP-N-acetyl-alpha-D-glucosamine. Acetyl-CoA is bound by residues Ala375, 381-382 (NY), Ser400, Ala418, and Arg435.

In the N-terminal section; belongs to the N-acetylglucosamine-1-phosphate uridyltransferase family. This sequence in the C-terminal section; belongs to the transferase hexapeptide repeat family. In terms of assembly, homotrimer. Mg(2+) serves as cofactor.

It localises to the cytoplasm. It catalyses the reaction alpha-D-glucosamine 1-phosphate + acetyl-CoA = N-acetyl-alpha-D-glucosamine 1-phosphate + CoA + H(+). The catalysed reaction is N-acetyl-alpha-D-glucosamine 1-phosphate + UTP + H(+) = UDP-N-acetyl-alpha-D-glucosamine + diphosphate. It functions in the pathway nucleotide-sugar biosynthesis; UDP-N-acetyl-alpha-D-glucosamine biosynthesis; N-acetyl-alpha-D-glucosamine 1-phosphate from alpha-D-glucosamine 6-phosphate (route II): step 2/2. It participates in nucleotide-sugar biosynthesis; UDP-N-acetyl-alpha-D-glucosamine biosynthesis; UDP-N-acetyl-alpha-D-glucosamine from N-acetyl-alpha-D-glucosamine 1-phosphate: step 1/1. Its pathway is bacterial outer membrane biogenesis; LPS lipid A biosynthesis. In terms of biological role, catalyzes the last two sequential reactions in the de novo biosynthetic pathway for UDP-N-acetylglucosamine (UDP-GlcNAc). The C-terminal domain catalyzes the transfer of acetyl group from acetyl coenzyme A to glucosamine-1-phosphate (GlcN-1-P) to produce N-acetylglucosamine-1-phosphate (GlcNAc-1-P), which is converted into UDP-GlcNAc by the transfer of uridine 5-monophosphate (from uridine 5-triphosphate), a reaction catalyzed by the N-terminal domain. In Trichormus variabilis (strain ATCC 29413 / PCC 7937) (Anabaena variabilis), this protein is Bifunctional protein GlmU.